Reading from the N-terminus, the 1082-residue chain is Integrator complex subunit 3 homolog (1082 aa).

Disordered regions lie at residues 483-563 (PGPP…VSDD), 923-945 (YPSN…TAPT), and 1005-1082 (DETS…SDSD). Composition is skewed to low complexity over residues 517–528 (PAAKAASTAASA) and 542–555 (TKPA…TTTT). Polar residues predominate over residues 936–945 (KSAQQNTAPT). Composition is skewed to low complexity over residues 1008–1018 (STTVGRRGTSS) and 1033–1056 (EKAA…ASAK).

This sequence belongs to the Integrator subunit 3 family. Belongs to the multiprotein complex Integrator. The core complex associates with protein phosphatase 2A subunits, to form the Integrator-PP2A (INTAC) complex.

It localises to the nucleus. Its subcellular location is the cytoplasm. Functionally, component of the integrator complex, a multiprotein complex that terminates RNA polymerase II (Pol II) transcription in the promoter-proximal region of genes. The integrator complex provides a quality checkpoint during transcription elongation by driving premature transcription termination of transcripts that are unfavorably configured for transcriptional elongation: the complex terminates transcription by (1) catalyzing dephosphorylation of the C-terminal domain (CTD) of Pol II subunit Polr2A/Rbp1 and Spt5, and (2) degrading the exiting nascent RNA transcript via endonuclease activity. The integrator complex is also involved in the 3'-end processing of the U7 snRNA, and also the spliceosomal snRNAs U1, U2, U4 and U5. The chain is Integrator complex subunit 3 homolog from Anopheles gambiae (African malaria mosquito).